Reading from the N-terminus, the 140-residue chain is Large ribosomal subunit protein uL14 (140 aa).

It belongs to the universal ribosomal protein uL14 family. Part of the 50S ribosomal subunit. Forms a cluster with proteins L3 and L24e, part of which may contact the 16S rRNA in 2 intersubunit bridges.

Functionally, binds to 23S rRNA. Forms part of two intersubunit bridges in the 70S ribosome. The chain is Large ribosomal subunit protein uL14 from Aeropyrum pernix (strain ATCC 700893 / DSM 11879 / JCM 9820 / NBRC 100138 / K1).